Consider the following 206-residue polypeptide: Large ribosomal subunit protein uL4 (206 aa).

A disordered region spans residues 47 to 79 (GTKGQKNRSAVRGGGAKPWAQKGSGRARAGTSR). Over residues 69–79 (GSGRARAGTSR) the composition is skewed to low complexity.

The protein belongs to the universal ribosomal protein uL4 family. As to quaternary structure, part of the 50S ribosomal subunit.

One of the primary rRNA binding proteins, this protein initially binds near the 5'-end of the 23S rRNA. It is important during the early stages of 50S assembly. It makes multiple contacts with different domains of the 23S rRNA in the assembled 50S subunit and ribosome. In terms of biological role, forms part of the polypeptide exit tunnel. The chain is Large ribosomal subunit protein uL4 from Hydrogenovibrio crunogenus (strain DSM 25203 / XCL-2) (Thiomicrospira crunogena).